The sequence spans 369 residues: Glutamate 5-kinase (369 aa).

Position 9 (Lys9) interacts with ATP. Residues Ser49, Asp136, and Asn148 each coordinate substrate. Residues 168–169 (TD) and 210–216 (TGGMLTK) each bind ATP. Residues 275–355 (QGSIWVDKGA…KGVLIYRDDW (81 aa)) enclose the PUA domain.

Belongs to the glutamate 5-kinase family.

The protein localises to the cytoplasm. The catalysed reaction is L-glutamate + ATP = L-glutamyl 5-phosphate + ADP. It functions in the pathway amino-acid biosynthesis; L-proline biosynthesis; L-glutamate 5-semialdehyde from L-glutamate: step 1/2. Its function is as follows. Catalyzes the transfer of a phosphate group to glutamate to form L-glutamate 5-phosphate. In Streptococcus pneumoniae serotype 2 (strain D39 / NCTC 7466), this protein is Glutamate 5-kinase.